We begin with the raw amino-acid sequence, 611 residues long: Protein ral2 (611 aa).

3 Kelch repeats span residues 43–91 (EAFV…HSGD), 96–149 (KLIF…EVNG), and 175–224 (YLII…VINK). Position 604 is a phosphoserine (serine 604).

Functionally, essential for mating and for recognition of the mating pheromone, and for the determination of cell shape. Implicated in activation of the ras1 protein. The protein is Protein ral2 (ral2) of Schizosaccharomyces pombe (strain 972 / ATCC 24843) (Fission yeast).